The following is a 27-amino-acid chain: Alpha-benincasin (27 aa).

Functionally, has weak antifungal activity toward C.comatus and P.piricola but not toward M.arachidicola. Inhibits cell-free translation in rabbit reticulocyte lysate system. In Benincasa hispida (Wax gourd), this protein is Alpha-benincasin.